The chain runs to 102 residues: Large ribosomal subunit protein bL21 (102 aa).

This sequence belongs to the bacterial ribosomal protein bL21 family. In terms of assembly, part of the 50S ribosomal subunit. Contacts protein L20.

In terms of biological role, this protein binds to 23S rRNA in the presence of protein L20. In Citrifermentans bemidjiense (strain ATCC BAA-1014 / DSM 16622 / JCM 12645 / Bem) (Geobacter bemidjiensis), this protein is Large ribosomal subunit protein bL21.